The chain runs to 600 residues: Oligopeptide-binding protein OppA (600 aa).

The signal sequence occupies residues 1-22 (MNKLKVTLLASSVVLAATLLSA). A lipid anchor (N-palmitoyl cysteine) is attached at Cys-23. Cys-23 is lipidated: S-diacylglycerol cysteine.

This sequence belongs to the bacterial solute-binding protein 5 family. In terms of assembly, the complex is composed of two ATP-binding proteins (OppD and OppF), two transmembrane proteins (OppB and OppC) and a solute-binding protein (OppA).

The protein resides in the cell membrane. In terms of biological role, part of the ABC transporter complex OppABCDF involved in the uptake of oligopeptides. Essential for uptake of peptides larger than three amino acids and for growth in milk. In Lactococcus lactis subsp. lactis (Streptococcus lactis), this protein is Oligopeptide-binding protein OppA.